An 82-amino-acid chain; its full sequence is ATP synthase subunit c (82 aa).

2 helical membrane passes run 3–23 (PLIA…ASLG) and 57–77 (LAFM…LLFA).

F-type ATPases have 2 components, F(1) - the catalytic core - and F(0) - the membrane proton channel. F(1) has five subunits: alpha(3), beta(3), gamma(1), delta(1), epsilon(1). F(0) has four main subunits: a(1), b(1), b'(1) and c(10-14). The alpha and beta chains form an alternating ring which encloses part of the gamma chain. F(1) is attached to F(0) by a central stalk formed by the gamma and epsilon chains, while a peripheral stalk is formed by the delta, b and b' chains.

It is found in the cellular thylakoid membrane. Inhibited by dicyclohexylcarbodiimide. In terms of biological role, f(1)F(0) ATP synthase produces ATP from ADP in the presence of a proton or sodium gradient. F-type ATPases consist of two structural domains, F(1) containing the extramembraneous catalytic core and F(0) containing the membrane proton channel, linked together by a central stalk and a peripheral stalk. During catalysis, ATP synthesis in the catalytic domain of F(1) is coupled via a rotary mechanism of the central stalk subunits to proton translocation. Functionally, key component of the F(0) channel; it plays a direct role in translocation across the membrane. A homomeric c-ring of between 10-14 subunits forms the central stalk rotor element with the F(1) delta and epsilon subunits. The complex from the organism is particularly stable to disruption and remains functional after 6 hrs at 55 degrees Celsius. The polypeptide is ATP synthase subunit c (atpE) (Thermosynechococcus vestitus (strain NIES-2133 / IAM M-273 / BP-1)).